A 382-amino-acid polypeptide reads, in one-letter code: tRNA(Met) cytidine acetate ligase (382 aa).

Residues 9–22 (VTEY…HAYQ), glycine 103, asparagine 152, and arginine 177 each bind ATP.

This sequence belongs to the TmcAL family.

It localises to the cytoplasm. The catalysed reaction is cytidine(34) in elongator tRNA(Met) + acetate + ATP = N(4)-acetylcytidine(34) in elongator tRNA(Met) + AMP + diphosphate. Its function is as follows. Catalyzes the formation of N(4)-acetylcytidine (ac(4)C) at the wobble position of elongator tRNA(Met), using acetate and ATP as substrates. First activates an acetate ion to form acetyladenylate (Ac-AMP) and then transfers the acetyl group to tRNA to form ac(4)C34. This Levilactobacillus brevis (strain ATCC 367 / BCRC 12310 / CIP 105137 / JCM 1170 / LMG 11437 / NCIMB 947 / NCTC 947) (Lactobacillus brevis) protein is tRNA(Met) cytidine acetate ligase.